The chain runs to 1116 residues: Ubiquitin C-terminal hydrolase 12 (1116 aa).

Residues 1–10 (MTMMTPPPVD) are compositionally biased toward pro residues. The tract at residues 1–52 (MTMMTPPPVDQPEDEEMLVPNSDLVDGPAQPMEVTQPETAASTVENQPAEDP) is disordered. Residues 36–46 (QPETAASTVEN) are compositionally biased toward polar residues. Residues 54–179 (TLKFTWTIPN…NDTVLVEAEV (126 aa)) form the MATH domain. The USP domain occupies 199–524 (VGLKNQGATC…NAYMLVYIRE (326 aa)). Cys208 serves as the catalytic Nucleophile. The Proton acceptor role is filled by His455.

This sequence belongs to the peptidase C19 family. Interacts with SIC/RON3.

It carries out the reaction Thiol-dependent hydrolysis of ester, thioester, amide, peptide and isopeptide bonds formed by the C-terminal Gly of ubiquitin (a 76-residue protein attached to proteins as an intracellular targeting signal).. Its function is as follows. Recognizes and hydrolyzes the peptide bond at the C-terminal Gly of ubiquitin. Involved in the processing of poly-ubiquitin precursors as well as that of ubiquitinated proteins. Positive regulator of root meristem development that, together with UBP13, prevents the ubiquitination and turnover of RGFR1 induced by the RGF1 hormone peptide, thus influencing PLT1 and PLT2 expression. The polypeptide is Ubiquitin C-terminal hydrolase 12 (Arabidopsis thaliana (Mouse-ear cress)).